Consider the following 326-residue polypeptide: Beta-ketoacyl-[acyl-carrier-protein] synthase III (326 aa).

Catalysis depends on residues cysteine 116 and histidine 253. Residues 254 to 258 (QANIR) are ACP-binding. Asparagine 283 is an active-site residue.

This sequence belongs to the thiolase-like superfamily. FabH family. As to quaternary structure, homodimer.

It is found in the cytoplasm. It carries out the reaction malonyl-[ACP] + acetyl-CoA + H(+) = 3-oxobutanoyl-[ACP] + CO2 + CoA. The protein operates within lipid metabolism; fatty acid biosynthesis. In terms of biological role, catalyzes the condensation reaction of fatty acid synthesis by the addition to an acyl acceptor of two carbons from malonyl-ACP. Catalyzes the first condensation reaction which initiates fatty acid synthesis and may therefore play a role in governing the total rate of fatty acid production. Possesses both acetoacetyl-ACP synthase and acetyl transacylase activities. Its substrate specificity determines the biosynthesis of branched-chain and/or straight-chain of fatty acids. This is Beta-ketoacyl-[acyl-carrier-protein] synthase III from Jannaschia sp. (strain CCS1).